A 206-amino-acid polypeptide reads, in one-letter code: Ribosomal RNA small subunit methyltransferase G (206 aa).

S-adenosyl-L-methionine-binding positions include glycine 73, leucine 78, 124–125, and arginine 139; that span reads VE.

Belongs to the methyltransferase superfamily. RNA methyltransferase RsmG family.

Its subcellular location is the cytoplasm. It catalyses the reaction guanosine(527) in 16S rRNA + S-adenosyl-L-methionine = N(7)-methylguanosine(527) in 16S rRNA + S-adenosyl-L-homocysteine. Its function is as follows. Specifically methylates the N7 position of guanine in position 527 of 16S rRNA. The polypeptide is Ribosomal RNA small subunit methyltransferase G (Photobacterium profundum (strain SS9)).